The sequence spans 518 residues: Protein nucleotidyltransferase YdiU (518 aa).

Over residues 1 to 10 (MTHLQFDNRL) the composition is skewed to basic and acidic residues. The disordered stretch occupies residues 1–23 (MTHLQFDNRLRAQLPGDPEQGPR). ATP is bound by residues G100, G102, R103, K123, D135, G136, R193, and R200. The active-site Proton acceptor is D270. Residues N271 and D280 each coordinate Mg(2+). D280 lines the ATP pocket.

It belongs to the SELO family. Mg(2+) is required as a cofactor. The cofactor is Mn(2+).

The catalysed reaction is L-seryl-[protein] + ATP = 3-O-(5'-adenylyl)-L-seryl-[protein] + diphosphate. The enzyme catalyses L-threonyl-[protein] + ATP = 3-O-(5'-adenylyl)-L-threonyl-[protein] + diphosphate. It catalyses the reaction L-tyrosyl-[protein] + ATP = O-(5'-adenylyl)-L-tyrosyl-[protein] + diphosphate. It carries out the reaction L-histidyl-[protein] + UTP = N(tele)-(5'-uridylyl)-L-histidyl-[protein] + diphosphate. The catalysed reaction is L-seryl-[protein] + UTP = O-(5'-uridylyl)-L-seryl-[protein] + diphosphate. The enzyme catalyses L-tyrosyl-[protein] + UTP = O-(5'-uridylyl)-L-tyrosyl-[protein] + diphosphate. Nucleotidyltransferase involved in the post-translational modification of proteins. It can catalyze the addition of adenosine monophosphate (AMP) or uridine monophosphate (UMP) to a protein, resulting in modifications known as AMPylation and UMPylation. This is Protein nucleotidyltransferase YdiU from Xanthomonas campestris pv. campestris (strain B100).